We begin with the raw amino-acid sequence, 183 residues long: Secreted RxLR effector protein 41 (183 aa).

Residues 1–18 (MLGFVTGVLAISAHVIVS) form the signal peptide. Positions 41 to 65 (RRLRSYETDTASARAEEGTSDIEER) match the RxLR-dEER motif. Asparagine 88 is a glycosylation site (N-linked (GlcNAc...) asparagine).

The protein belongs to the RxLR effector family.

The protein localises to the secreted. The protein resides in the host nucleus. Its subcellular location is the host cytoplasm. Secreted effector that dos not suppress the host cell death induced by cell death-inducing proteins. The chain is Secreted RxLR effector protein 41 from Plasmopara viticola (Downy mildew of grapevine).